We begin with the raw amino-acid sequence, 145 residues long: YIDAETMHLHHDKHHQAYVNNANAALEKHPEIGEDLEALLADVESIPADIRQALINNGGGHLNHALFWELMTPEKTAPSAELAAAIDATFGSFEEFQAAFTAAATTRFGSGWAWLVVNKEGKLEVTSTANQDTPISEGKKPILGL.

Fe(3+) is bound by residues His10 and His64. Mn(2+)-binding residues include His10 and His64. The disordered stretch occupies residues 126–145 (TSTANQDTPISEGKKPILGL).

The protein belongs to the iron/manganese superoxide dismutase family. Requires Mn(2+) as cofactor. The cofactor is Fe(3+).

The catalysed reaction is 2 superoxide + 2 H(+) = H2O2 + O2. Destroys superoxide anion radicals which are normally produced within the cells and which are toxic to biological systems. Catalyzes the dismutation of superoxide anion radicals into O2 and H2O2 by successive reduction and oxidation of the transition metal ion at the active site. This is Superoxide dismutase [Mn/Fe] (sodA) from Streptococcus oralis.